Consider the following 73-residue polypeptide: Putative antitoxin VapB9 (73 aa).

Functionally, antitoxin component of a possible type II toxin-antitoxin (TA) system. The cognate toxin is VapC9. The polypeptide is Putative antitoxin VapB9 (vapB9) (Mycobacterium tuberculosis (strain CDC 1551 / Oshkosh)).